Reading from the N-terminus, the 206-residue chain is Large ribosomal subunit protein uL22m (206 aa).

The N-terminal 40 residues, 1-40, are a transit peptide targeting the mitochondrion; that stretch reads MAAAVLGQLGALWIHNLRSRGRLAWGVLPQSYVHTSASLD.

Belongs to the universal ribosomal protein uL22 family. Component of the mitochondrial ribosome large subunit (39S) which comprises a 16S rRNA and about 50 distinct proteins.

The protein localises to the mitochondrion. This is Large ribosomal subunit protein uL22m (MRPL22) from Pongo abelii (Sumatran orangutan).